The sequence spans 385 residues: ELAV-like protein 4 (385 aa).

The tract at residues 12 to 48 (TMEPQVSNGPTSNTSNGPSSNNRNCPSPMQTGATTDD) is disordered. Residues 18–33 (SNGPTSNTSNGPSSNN) are compositionally biased toward low complexity. Over residues 34–48 (RNCPSPMQTGATTDD) the composition is skewed to polar residues. A Phosphoserine modification is found at serine 38. 2 RRM domains span residues 51-129 (TNLI…YARP) and 137-217 (ANLY…FANN). Position 233 is a phosphoserine (serine 233). At arginine 248 the chain carries Asymmetric dimethylarginine; by CARM1; alternate. Omega-N-methylarginine; by CARM1; alternate is present on arginine 248. The RRM 3 domain maps to 302 to 380 (WCIFVYNLSP…RVLQVSFKTN (79 aa)).

Belongs to the RRM elav family. As to quaternary structure, component of a TAU mRNP complex, at least composed of IGF2BP1, ELAVL4 and G3BP. Associates with the EIF4F cap-binding complex, composed of EIF4G, EIF4A, EIF4E and PABP. Within the EIF4F cap-binding complex, interacts with EIF4A. Interacts with SMN (via Tudor domain) in an RNA-independent manner; the interaction is required for localization of ELAVL4 to RNA granules. Interacts with MAP1 light chain LC1 (via C-terminus); the interaction contributes to the association of ELAVL4 with microtubules. Interacts with MAP1 light chain LC2. Methylated by CARM1, which leads to reduced RNA-binding activity and enhanced interaction with SMN. Methylation at Arg-248 by CARM1 weakens protective binding to the 3'UTR of CDKN1A mRNA and down-regulates CDKN1A protein expression, thereby maintaining cells in a proliferative state. Methylation is inhibited by NGF, which facilitates neurite outgrowth. In terms of tissue distribution, expressed in pancreatic beta cells (at protein level). Expressed in the brain.

It is found in the cytoplasm. The protein localises to the perikaryon. It localises to the cell projection. Its subcellular location is the dendrite. The protein resides in the axon. It is found in the growth cone. Its function is as follows. RNA-binding protein that is involved in the post-transcriptional regulation of mRNAs. Plays a role in the regulation of mRNA stability, alternative splicing and translation. Binds to AU-rich element (ARE) sequences in the 3' untranslated region (UTR) of target mRNAs, including GAP43, VEGF, FOS, CDKN1A and ACHE mRNA. Many of the target mRNAs are coding for RNA-binding proteins, transcription factors and proteins involved in RNA processing and/or neuronal development and function. By binding to the mRNA 3'UTR, decreases mRNA deadenylation and thereby contributes to the stabilization of mRNA molecules and their protection from decay. Also binds to the polyadenylated (poly(A)) tail in the 3'UTR of mRNA, thereby increasing its affinity for mRNA binding. Mainly plays a role in neuron-specific RNA processing by stabilization of mRNAs such as GAP43, ACHE and mRNAs of other neuronal proteins, thereby contributing to the differentiation of neural progenitor cells, nervous system development, learning and memory mechanisms. Involved in the negative regulation of the proliferative activity of neuronal stem cells and in the positive regulation of neuronal differentiation of neural progenitor cells. Promotes neuronal differentiation of neural stem/progenitor cells in the adult subventricular zone of the hippocampus by binding to and stabilizing SATB1 mRNA. Binds and stabilizes MSI1 mRNA in neural stem cells. Exhibits increased binding to ACHE mRNA during neuronal differentiation, thereby stabilizing ACHE mRNA and enhancing its expression. Protects CDKN1A mRNA from decay by binding to its 3'-UTR. May bind to APP and BACE1 mRNAS and the BACE1AS lncRNA and enhance their stabilization. Plays a role in neurite outgrowth and in the establishment and maturation of dendritic arbors, thereby contributing to neocortical and hippocampal circuitry function. Stabilizes GAP43 mRNA and protects it from decay during postembryonic development in the brain. By promoting the stabilization of GAP43 mRNA, plays a role in NGF-mediated neurite outgrowth. Binds to BDNF long 3'UTR mRNA, thereby leading to its stabilization and increased dendritic translation after activation of PKC. By increasing translation of BDNF after nerve injury, may contribute to nerve regeneration. Acts as a stabilizing factor by binding to the 3'UTR of NOVA1 mRNA, thereby increasing its translation and enhancing its functional activity in neuron-specific splicing. Stimulates translation of mRNA in a poly(A)- and cap-dependent manner, possibly by associating with the EIF4F cap-binding complex. May also negatively regulate translation by binding to the 5'UTR of Ins2 mRNA, thereby repressing its translation. Upon glucose stimulation, Ins2 mRNA is released from ELAVL4 and translational inhibition is abolished. Also plays a role in the regulation of alternative splicing. May regulate alternative splicing of CALCA pre-mRNA into Calcitonin and Calcitonin gene-related peptide 1 (CGRP) by competing with splicing regulator TIAR for binding to U-rich intronic sequences of CALCA pre-mRNA. The protein is ELAV-like protein 4 (ELAVL4) of Homo sapiens (Human).